We begin with the raw amino-acid sequence, 594 residues long: DNA polymerase epsilon subunit B (594 aa).

This sequence belongs to the DNA polymerase epsilon subunit B family. As to quaternary structure, heterotetramer. Consists of four subunits: pol2, dpb2, dpb3 and dpb4. Interacts with dpb3.

It localises to the nucleus. Its function is as follows. As accessory component of the DNA polymerase epsilon (DNA polymerase II) participates in chromosomal DNA replication. This Schizosaccharomyces pombe (strain 972 / ATCC 24843) (Fission yeast) protein is DNA polymerase epsilon subunit B (dpb2).